Consider the following 234-residue polypeptide: Thymidylate kinase (234 aa).

ATP is bound at residue 20 to 27; that stretch reads GIDASGKT.

Belongs to the thymidylate kinase family.

It catalyses the reaction dTMP + ATP = dTDP + ADP. Phosphorylation of dTMP to form dTDP in both de novo and salvage pathways of dTTP synthesis. This is Thymidylate kinase from Mycoplasmopsis pulmonis (strain UAB CTIP) (Mycoplasma pulmonis).